Here is a 529-residue protein sequence, read N- to C-terminus: Acid-sensing ion channel 1C (529 aa).

Residues 1–51 (MTAMKGDSEDSIESMRPSNLQVFANNSTLHGMSHIFAYGHMTFRRFLWTLS) are Cytoplasmic-facing. The helical transmembrane segment at 52-68 (FMGSLGLLMYVCMDRVY) threads the bilayer. Residues 69-427 (YYFEFPHVTK…EKIEQKKAYE (359 aa)) lie on the Extracellular side of the membrane. N-linked (GlcNAc...) asparagine glycosylation is found at Asn-86, Asn-155, and Asn-161. Disulfide bonds link Cys-95-Cys-196, Cys-174-Cys-181, Cys-292-Cys-367, Cys-310-Cys-363, Cys-314-Cys-361, Cys-323-Cys-345, and Cys-325-Cys-337. Asn-185 carries an N-linked (GlcNAc...) asparagine glycan. 2 N-linked (GlcNAc...) asparagine glycosylation sites follow: Asn-368 and Asn-395. A discontinuously helical transmembrane segment spans residues 428-458 (VAGLLGDIGGQMGLFIGASVLTILEIFDYLY). The GAS motif; ion selectivity filter signature appears at 444–446 (GAS). The Cytoplasmic portion of the chain corresponds to 459–529 (EVLKDKILGS…PFVVGSNSGK (71 aa)).

The protein belongs to the amiloride-sensitive sodium channel (TC 1.A.6) family. ASIC1 subfamily. Homotrimer. Heterotrimer; with other ASIC proteins producing channel with different properties. Interacts with asic1a. Expressed in central nervous system.

The protein resides in the cell membrane. It is found in the postsynaptic cell membrane. It localises to the cell projection. Its subcellular location is the dendrite. It carries out the reaction Na(+)(in) = Na(+)(out). The enzyme catalyses K(+)(in) = K(+)(out). The catalysed reaction is Li(+)(in) = Li(+)(out). It catalyses the reaction Ca(2+)(in) = Ca(2+)(out). Its activity is regulated as follows. Inhibited by the diuretic drug amiloride. Its function is as follows. Forms voltage-independent, pH-gated trimeric sodium channels that act as postsynaptic excitatory receptors in the nervous system, playing a crucial role in regulating synaptic plasticity, learning, and memory. Upon extracellular pH drop this channel elicits transient, fast activating, and completely desensitizing inward currents. Displays high selectivity for sodium ions but can also permit the permeation of other cations. This is Acid-sensing ion channel 1C from Danio rerio (Zebrafish).